The chain runs to 445 residues: Ribosomal protein uS12 methylthiotransferase RimO (445 aa).

The region spanning 4 to 119 (IKVALVSLGC…LLESIKVFLK (116 aa)) is the MTTase N-terminal domain. The [4Fe-4S] cluster site is built by cysteine 13, cysteine 48, cysteine 82, cysteine 156, cysteine 160, and cysteine 163. A Radical SAM core domain is found at 142-372 (TTPTYTAYVR…MILQQSISKD (231 aa)). In terms of domain architecture, TRAM spans 375–441 (KEKIGKIYEV…EYDLIGVVYN (67 aa)).

It belongs to the methylthiotransferase family. RimO subfamily. [4Fe-4S] cluster is required as a cofactor.

The protein resides in the cytoplasm. It carries out the reaction L-aspartate(89)-[ribosomal protein uS12]-hydrogen + (sulfur carrier)-SH + AH2 + 2 S-adenosyl-L-methionine = 3-methylsulfanyl-L-aspartate(89)-[ribosomal protein uS12]-hydrogen + (sulfur carrier)-H + 5'-deoxyadenosine + L-methionine + A + S-adenosyl-L-homocysteine + 2 H(+). Catalyzes the methylthiolation of an aspartic acid residue of ribosomal protein uS12. The sequence is that of Ribosomal protein uS12 methylthiotransferase RimO from Clostridium botulinum (strain Langeland / NCTC 10281 / Type F).